A 106-amino-acid polypeptide reads, in one-letter code: Putative double-stranded DNA mimic protein VIBHAR_02752 (106 aa).

Belongs to the putative dsDNA mimic protein family.

Functionally, may act as a double-stranded DNA (dsDNA) mimic. Probably regulates the activity of a dsDNA-binding protein. The sequence is that of Putative double-stranded DNA mimic protein VIBHAR_02752 from Vibrio campbellii (strain ATCC BAA-1116).